The primary structure comprises 827 residues: Endoribonuclease YSH1 (827 aa).

6 residues coordinate Zn(2+): His-96, His-98, Asp-100, His-101, His-184, and Asp-205. The active-site Proton donor is His-426. His-448 is a binding site for Zn(2+). Positions 583–592 (EDDVAEEEED) are enriched in acidic residues. Disordered stretches follow at residues 583–621 (EDDV…KEEE) and 802–827 (DREE…KEEE). Positions 606-621 (GEVKDETAEEVKKEEE) are enriched in basic and acidic residues.

The protein belongs to the metallo-beta-lactamase superfamily. RNA-metabolizing metallo-beta-lactamase-like family. CPSF2/YSH1 subfamily.

Its subcellular location is the nucleus. In terms of biological role, component of the cleavage factor I (CF I) involved in pre-mRNA 3'-end processing. This is Endoribonuclease YSH1 (YSH1) from Yarrowia lipolytica (strain CLIB 122 / E 150) (Yeast).